We begin with the raw amino-acid sequence, 396 residues long: tRNA (guanine(9)-N1)-methyltransferase (396 aa).

2 stretches are compositionally biased toward basic and acidic residues: residues 1–18 (MEDD…HDEV) and 52–73 (DRID…HGKD). Residues 1-109 (MEDDDRPRKY…KVKRKEKLVA (109 aa)) form a disordered region. Residues 139–357 (TQKKFQRSTL…QVIPQRKGGK (219 aa)) enclose the SAM-dependent MTase TRM10-type domain. S-adenosyl-L-methionine is bound by residues 264–265 (LS), G284, 288–292 (DKNRH), C296, L310, and 322–324 (QVL). Catalysis depends on D288, which acts as the Proton acceptor. Residues 354–396 (KGGKLKSADHESEDQTPRESVEAVEAEPDGEGAAAEAGEGGKE) form a disordered region. Positions 359 to 374 (KSADHESEDQTPRESV) are enriched in basic and acidic residues.

Belongs to the class IV-like SAM-binding methyltransferase superfamily. TRM10 family. Monomer.

It is found in the cytoplasm. Its subcellular location is the nucleus. It carries out the reaction guanosine(9) in tRNA + S-adenosyl-L-methionine = N(1)-methylguanosine(9) in tRNA + S-adenosyl-L-homocysteine + H(+). Its function is as follows. S-adenosyl-L-methionine-dependent guanine N(1)-methyltransferase that catalyzes the formation of N(1)-methylguanine at position 9 (m1G9) in cytoplasmic tRNA. The polypeptide is tRNA (guanine(9)-N1)-methyltransferase (Aspergillus fumigatus (strain ATCC MYA-4609 / CBS 101355 / FGSC A1100 / Af293) (Neosartorya fumigata)).